Here is a 133-residue protein sequence, read N- to C-terminus: Ribosome-binding factor A (133 aa).

This sequence belongs to the RbfA family. In terms of assembly, monomer. Binds 30S ribosomal subunits, but not 50S ribosomal subunits or 70S ribosomes.

It localises to the cytoplasm. In terms of biological role, one of several proteins that assist in the late maturation steps of the functional core of the 30S ribosomal subunit. Associates with free 30S ribosomal subunits (but not with 30S subunits that are part of 70S ribosomes or polysomes). Required for efficient processing of 16S rRNA. May interact with the 5'-terminal helix region of 16S rRNA. This chain is Ribosome-binding factor A, found in Escherichia coli O127:H6 (strain E2348/69 / EPEC).